A 208-amino-acid chain; its full sequence is GTP cyclohydrolase-2 (208 aa).

49–53 (RLHSE) is a binding site for GTP. 3 residues coordinate Zn(2+): Cys54, Cys65, and Cys67. GTP contacts are provided by residues Gln70, 92 to 94 (EGR), and Thr114. Asp126 functions as the Proton acceptor in the catalytic mechanism. The Nucleophile role is filled by Arg128. 2 residues coordinate GTP: Thr149 and Lys154.

This sequence belongs to the GTP cyclohydrolase II family. Requires Zn(2+) as cofactor.

The catalysed reaction is GTP + 4 H2O = 2,5-diamino-6-hydroxy-4-(5-phosphoribosylamino)-pyrimidine + formate + 2 phosphate + 3 H(+). Its pathway is cofactor biosynthesis; riboflavin biosynthesis; 5-amino-6-(D-ribitylamino)uracil from GTP: step 1/4. In terms of biological role, catalyzes the conversion of GTP to 2,5-diamino-6-ribosylamino-4(3H)-pyrimidinone 5'-phosphate (DARP), formate and pyrophosphate. The polypeptide is GTP cyclohydrolase-2 (Azotobacter vinelandii (strain DJ / ATCC BAA-1303)).